A 427-amino-acid chain; its full sequence is Interleukin-13 receptor subunit alpha-1 (427 aa).

An N-terminal signal peptide occupies residues 1-21; the sequence is MEWPARLCGLWALLLCAGGGG. The Extracellular portion of the chain corresponds to 22–343; that stretch reads GGGGAAPTET…MSIGKKRNST (322 aa). 3 Fibronectin type-III domains span residues 34–123, 128–226, and 227–339; these read PVTN…PPEG, AVTE…TSRV, and KPDP…IGKK. N-linked (GlcNAc...) asparagine glycans are attached at residues Asn37 and Asn61. 3 disulfides stabilise this stretch: Cys62-Cys102, Cys95-Cys117, and Cys134-Cys144. Asn105, Asn138, and Asn157 each carry an N-linked (GlcNAc...) asparagine glycan. The cysteines at positions 173 and 185 are disulfide-linked. N-linked (GlcNAc...) asparagine glycans are attached at residues Asn235, Asn265, Asn293, Asn329, and Asn341. Cystine bridges form between Cys257-Cys320 and Cys282-Cys296. The WSXWS motif motif lies at 327–331; sequence WSNWS. Residues 344 to 367 traverse the membrane as a helical segment; the sequence is LYITMLLIVPVIVAGAIIVLLLYL. Residues 368–427 lie on the Cytoplasmic side of the membrane; it reads KRLKIIIFPPIPDPGKIFKEMFGDQNDDTLHWKKYDIYEKQTKEETDSVVLIENLKKASQ. The short motif at 374 to 382 is the Box 1 motif element; the sequence is IFPPIPDPG.

This sequence belongs to the type I cytokine receptor family. Type 5 subfamily. In terms of assembly, interleukin-13 receptor is a complex of IL4R, IL13RA1, and possibly other components. Interacts with TRAF3IP1. Interacts with IL4. In terms of tissue distribution, ubiquitous. Highest levels in heart, liver, skeletal muscle and ovary; lowest levels in brain, lung and kidney. Also found in B-cells, T-cells and endothelial cells.

The protein resides in the membrane. Binds with low affinity to interleukin-13 (IL13). Together with IL4RA can form a functional receptor for IL13. Also serves as an alternate accessory protein to the common cytokine receptor gamma chain for interleukin-4 (IL4) signaling, but cannot replace the function of IL2RG in allowing enhanced interleukin-2 (IL2) binding activity. This is Interleukin-13 receptor subunit alpha-1 (IL13RA1) from Homo sapiens (Human).